Consider the following 562-residue polypeptide: MDSEEDMLDAHDMESGEDDFYSGGTDDCNDSDDGEPDYGFVEEDADDSAMIASHRSQKNFCVLREEDIRRHQMDNIERVSVVLSITEVEASILLRHFHWSVGRVHDEWFADEERVRKTVGILESHVVPPSDDSELTCGICFDSYPPEKIASVSCGHPFCTTCWTGYISTTINDGPGCLMLRCPDPSCLAAVGHDMVDKLASEDEKEKYNRYFLRSYIEDNRKMKWCPAPGCDFAIDFVAGSGNYDVSCLCSFSFCWNCTEEAHRPVDCSTVSKWILKNSAESENMNWILANSKPCPRCKRPIEKNQGCMHMTCTPPCKYEFCWLCLGAWMDHGERTGGFYACNRYEVAKQEGQYDETERRREMAKNSLERYTHYYERWASNQTSRQKAMADLQQAQMQNLEKLSDKQCTPESQLKFILEAWLQIIECRRVLKWTYAYGYYLPEHEHAKRQFFEYLQGEAESGLERLHQCVEKDLVQFLIAEGPSKDFNDFRTKLAGLTSVTKNYFENLVKALENGLADVDSHAACSSKSTSSKSTGCSSKTRGKGKGSSRTGGSSRNPDDNL.

Residues 1 to 39 (MDSEEDMLDAHDMESGEDDFYSGGTDDCNDSDDGEPDYG) are disordered. Residues 27 to 39 (DCNDSDDGEPDYG) are compositionally biased toward acidic residues. The segment at 133–346 (SELTCGICFD…GGFYACNRYE (214 aa)) is TRIAD supradomain. 18 residues coordinate Zn(2+): Cys137, Cys140, Cys154, His156, Cys159, Cys162, Cys182, Cys187, Cys226, Cys231, Cys248, Cys250, Cys255, Cys258, His263, Cys268, Cys295, and Cys298. Residues 137–187 (CGICFDSYPPEKIASVSCGHPFCTTCWTGYISTTINDGPGCLMLRCPDPSC) form an RING-type 1 zinc finger. The IBR-type zinc finger occupies 206–268 (EKYNRYFLRS…TEEAHRPVDC (63 aa)). The RING-type 2; atypical zinc-finger motif lies at 295-325 (CPRCKRPIEKNQGCMHMTCTPPCKYEFCWLC). Cys308 is a catalytic residue. 6 residues coordinate Zn(2+): Cys313, Cys317, Cys322, Cys325, His332, and Cys342. Residues 524 to 562 (ACSSKSTSSKSTGCSSKTRGKGKGSSRTGGSSRNPDDNL) are disordered. Residues 525 to 540 (CSSKSTSSKSTGCSSK) are compositionally biased toward low complexity.

It belongs to the RBR family. Ariadne subfamily. Requires Zn(2+) as cofactor. In terms of tissue distribution, ubiquitous.

The catalysed reaction is [E2 ubiquitin-conjugating enzyme]-S-ubiquitinyl-L-cysteine + [acceptor protein]-L-lysine = [E2 ubiquitin-conjugating enzyme]-L-cysteine + [acceptor protein]-N(6)-ubiquitinyl-L-lysine.. It participates in protein modification; protein ubiquitination. Its function is as follows. Might act as an E3 ubiquitin-protein ligase, or as part of E3 complex, which accepts ubiquitin from specific E2 ubiquitin-conjugating enzymes and then transfers it to substrates. The sequence is that of Probable E3 ubiquitin-protein ligase ARI7 (ARI7) from Arabidopsis thaliana (Mouse-ear cress).